Here is a 239-residue protein sequence, read N- to C-terminus: Ribosomal RNA large subunit methyltransferase E (239 aa).

A disordered region spans residues 1–20 (MTKAPIAGNRTGRKLGQRVK). Residues 11–20 (TGRKLGQRVK) show a composition bias toward basic residues. Residues G81, W83, D104, D120, and D144 each coordinate S-adenosyl-L-methionine. K184 acts as the Proton acceptor in catalysis.

It belongs to the class I-like SAM-binding methyltransferase superfamily. RNA methyltransferase RlmE family.

The protein localises to the cytoplasm. The catalysed reaction is uridine(2552) in 23S rRNA + S-adenosyl-L-methionine = 2'-O-methyluridine(2552) in 23S rRNA + S-adenosyl-L-homocysteine + H(+). In terms of biological role, specifically methylates the uridine in position 2552 of 23S rRNA at the 2'-O position of the ribose in the fully assembled 50S ribosomal subunit. The protein is Ribosomal RNA large subunit methyltransferase E of Rhizobium leguminosarum bv. trifolii (strain WSM2304).